Here is a 417-residue protein sequence, read N- to C-terminus: RH-like protein (417 aa).

Transmembrane regions (helical) follow at residues 12–32, 44–64, 77–97, 125–145, 172–192, 203–223, 238–258, 265–285, 287–307, 331–351, and 358–378; these read CLPLWALTLEAALILLFFFFT, LVASYQVCQDLTVMAVLGLGF, VAFNLFLLALGVQWAILLDGF, ISMNAVLGKVNLVQLVVMELV, IHVFAAYFGLTVAWCLPKPLP, TSPSLFAMLGTLFLWMFWPTF, VFSTYYALAVSAVTAISVSSL, INMTYMHNAALAGGVALSASC, VIHSPWIAMVLGLVAGLISIG, TFGLPALLGEITYIVLMALRV, and MIGFQVLLSTGTLSLAMAMSI.

The protein belongs to the ammonium transporter (TC 2.A.49) family. Rh subfamily.

The protein localises to the membrane. In terms of biological role, may be part of an oligomeric complex which is likely to have a transport or channel function in the erythrocyte membrane. The sequence is that of RH-like protein from Macaca mulatta (Rhesus macaque).